A 310-amino-acid chain; its full sequence is Olfactory receptor 2A25 (310 aa).

At 1–24 the chain is on the extracellular side; it reads MGGNQTSITEFLLLGFPIGPRIQM. N-linked (GlcNAc...) asparagine glycosylation is present at Asn-4. Residues 25 to 48 traverse the membrane as a helical segment; that stretch reads LLFGLFSLFYIFILLGNGTILGLI. Residues 49 to 56 are Cytoplasmic-facing; that stretch reads SLDSRLHT. The helical transmembrane segment at 57–78 threads the bilayer; the sequence is PMYFFLSHLAVVDIACACSTVP. At 79–99 the chain is on the extracellular side; the sequence is QMLVNLLHPAKPISFAGCMTQ. A disulfide bond links Cys-96 and Cys-188. The helical transmembrane segment at 100–119 threads the bilayer; the sequence is MFLFLSFAHTECLLLVVMSY. The Cytoplasmic segment spans residues 120–138; sequence DRYVAICHPLRYSTIMTWK. The chain crosses the membrane as a helical span at residues 139–157; that stretch reads VCITLALTSWILGVLLALV. At 158–195 the chain is on the extracellular side; the sequence is HLVLLLPLSFCGPQKLNHFFCEIMAVLKLACADTHINE. The helical transmembrane segment at 196-218 threads the bilayer; that stretch reads VMVLAGAVSVLVGAFFSTVISYV. Over 219 to 235 the chain is Cytoplasmic; it reads HILCAILKIQSGEGCQK. Residues 236–258 traverse the membrane as a helical segment; sequence AFSICSSHLCVVGLFYGTAIIMY. Over 259–271 the chain is Extracellular; it reads VEPQYESPKEQKK. The helical transmembrane segment at 272–291 threads the bilayer; sequence YLLLFHSLFNPMLNPLIYSL. The Cytoplasmic portion of the chain corresponds to 292–310; that stretch reads RNKEVQGTLKRMLEKKRTS.

This sequence belongs to the G-protein coupled receptor 1 family.

It localises to the cell membrane. Odorant receptor. This is Olfactory receptor 2A25 (OR2A25) from Homo sapiens (Human).